We begin with the raw amino-acid sequence, 275 residues long: Transcription factor JUNGBRUNNEN 1 (275 aa).

Residues 1-24 (MSGEGNLGKDHEEENEAPLPGFRF) form a disordered region. Residues 18-167 (PLPGFRFHPT…VWTLCRIFKR (150 aa)) form the NAC domain. Residues 115–173 (VGLKKSLVYYLGSAGKGTKTDWMMHEFRLPSTTKTDSPAQQAEVWTLCRIFKRVTSQRN) mediate DNA binding. The tract at residues 191-219 (CSKTSSLDSDHTSHRTVDSMSHEPPLPQP) is disordered. The span at 198–211 (DSDHTSHRTVDSMS) shows a compositional bias: basic and acidic residues.

In terms of tissue distribution, expressed in roots, root caps, cotyledons, tips and margin of young leaves, senescent regions of fully expanded leaves and floral tissues, including old sepals, petals, staments, mature anthers and pollen grains. Not detected in the abscission zone of open flowers, emerging lateral roots and root meristematic zones.

It localises to the nucleus. Its function is as follows. Transcription factor that binds to the 5'- RRYGCCGT-3' consensus core sequence. Central longevity regulator. Negative regulator of leaf senescence. Modulates cellular H(2)O(2) levels and enhances tolerance to various abiotic stresses through the regulation of DREB2A. In Arabidopsis thaliana (Mouse-ear cress), this protein is Transcription factor JUNGBRUNNEN 1 (JUB1).